A 329-amino-acid polypeptide reads, in one-letter code: Glycerol-3-phosphate dehydrogenase [NAD(P)+] (329 aa).

Positions 11, 30, and 103 each coordinate NADPH. Sn-glycerol 3-phosphate is bound by residues Lys-103, Gly-132, and Ser-134. Residue Ala-136 participates in NADPH binding. Sn-glycerol 3-phosphate-binding residues include Lys-187, Asp-240, Ser-250, Arg-251, and Asn-252. Lys-187 functions as the Proton acceptor in the catalytic mechanism. Residue Arg-251 participates in NADPH binding. The NADPH site is built by Val-275 and Glu-277.

Belongs to the NAD-dependent glycerol-3-phosphate dehydrogenase family.

Its subcellular location is the cytoplasm. It catalyses the reaction sn-glycerol 3-phosphate + NAD(+) = dihydroxyacetone phosphate + NADH + H(+). It carries out the reaction sn-glycerol 3-phosphate + NADP(+) = dihydroxyacetone phosphate + NADPH + H(+). Its pathway is membrane lipid metabolism; glycerophospholipid metabolism. Catalyzes the reduction of the glycolytic intermediate dihydroxyacetone phosphate (DHAP) to sn-glycerol 3-phosphate (G3P), the key precursor for phospholipid synthesis. This is Glycerol-3-phosphate dehydrogenase [NAD(P)+] from Methylobacillus flagellatus (strain ATCC 51484 / DSM 6875 / VKM B-1610 / KT).